The following is a 511-amino-acid chain: 2,3-bisphosphoglycerate-independent phosphoglycerate mutase (511 aa).

Asp-12 is a Mn(2+) binding site. At Tyr-36 the chain carries Phosphotyrosine. A Mn(2+)-binding site is contributed by Ser-62. Ser-62 serves as the catalytic Phosphoserine intermediate. Residues His-123, 153–154 (RD), Arg-185, Arg-191, 261–264 (RPDR), and Lys-336 contribute to the substrate site. 5 residues coordinate Mn(2+): Asp-403, His-407, Asp-444, His-445, and His-462.

It belongs to the BPG-independent phosphoglycerate mutase family. As to quaternary structure, monomer. It depends on Mn(2+) as a cofactor.

The enzyme catalyses (2R)-2-phosphoglycerate = (2R)-3-phosphoglycerate. It functions in the pathway carbohydrate degradation; glycolysis; pyruvate from D-glyceraldehyde 3-phosphate: step 3/5. Catalyzes the interconversion of 2-phosphoglycerate and 3-phosphoglycerate. This chain is 2,3-bisphosphoglycerate-independent phosphoglycerate mutase, found in Geobacillus thermodenitrificans (strain NG80-2).